Here is an 83-residue protein sequence, read N- to C-terminus: Small ribosomal subunit protein bS20 (83 aa).

Belongs to the bacterial ribosomal protein bS20 family.

Functionally, binds directly to 16S ribosomal RNA. This chain is Small ribosomal subunit protein bS20, found in Leuconostoc mesenteroides subsp. mesenteroides (strain ATCC 8293 / DSM 20343 / BCRC 11652 / CCM 1803 / JCM 6124 / NCDO 523 / NBRC 100496 / NCIMB 8023 / NCTC 12954 / NRRL B-1118 / 37Y).